The following is a 272-amino-acid chain: Undecaprenyl-diphosphatase (272 aa).

Helical transmembrane passes span 4–24 (FEVI…FLPI), 43–63 (GGRV…CWLY), 86–106 (ISVL…VDFI), 109–129 (VLFS…IIFW), 145–165 (ITFK…IPGT), 186–206 (TEFS…FDLI), 222–242 (VGFV…VLFV), and 249–269 (VFAW…MFFN).

It belongs to the UppP family.

It is found in the cell inner membrane. The enzyme catalyses di-trans,octa-cis-undecaprenyl diphosphate + H2O = di-trans,octa-cis-undecaprenyl phosphate + phosphate + H(+). Its function is as follows. Catalyzes the dephosphorylation of undecaprenyl diphosphate (UPP). Confers resistance to bacitracin. This Acinetobacter baumannii (strain SDF) protein is Undecaprenyl-diphosphatase.